A 389-amino-acid chain; its full sequence is MGRAARWFKGIFGMKKSKEKENCVSGDVGGEAGGSNIHRKVLQADSVWLRTYLAETDKEQNKHAIAVAAATAAAADAAVAAAQAAVAVVRLTSNGRSGGYSGNAMERWAAVKIQSVFKGYLARKALRALKGLVKLQALVRGYLVRKRAAETLHSMQALIRAQTSVRSQRINRNNMFHPRHSLERLDDSRSEIHSKRISISVEKQSNHNNNAYDETSPKIVEIDTYKTKSRSKRMNVAVSECGDDFIYQAKDFEWSFPGEKCKFPTAQNTPRFSSSMANNNYYYTPPSPAKSVCRDACFRPSYPGLMTPSYMANTQSFKAKVRSHSAPRQRPDRKRLSLDEIMAARSSVSGVRMVQPQPQPQTQTQQQKRSPCSYDHQFRQNETDFRFYN.

IQ domains follow at residues 106-134 (ERWA…GLVK) and 135-157 (LQAL…SMQA). The segment at 137–151 (ALVRGYLVRKRAAET) is calmodulin-binding. The disordered stretch occupies residues 347–374 (SVSGVRMVQPQPQPQTQTQQQKRSPCSY).

Belongs to the IQD family. Binds to multiple calmodulin (CaM) in the presence of Ca(2+) and CaM-like proteins.

It localises to the cell membrane. The protein localises to the cytoplasm. The protein resides in the cytoskeleton. May be involved in cooperative interactions with calmodulins or calmodulin-like proteins. Recruits calmodulin proteins to microtubules, thus being a potential scaffold in cellular signaling and trafficking. May associate with nucleic acids and regulate gene expression at the transcriptional or post-transcriptional level. The sequence is that of Protein IQ-domain 26 from Arabidopsis thaliana (Mouse-ear cress).